Consider the following 415-residue polypeptide: Putative competence-damage inducible protein (415 aa).

The protein belongs to the CinA family.

The sequence is that of Putative competence-damage inducible protein from Listeria innocua serovar 6a (strain ATCC BAA-680 / CLIP 11262).